The sequence spans 461 residues: Asparagine--tRNA ligase (461 aa).

This sequence belongs to the class-II aminoacyl-tRNA synthetase family. As to quaternary structure, homodimer.

Its subcellular location is the cytoplasm. The catalysed reaction is tRNA(Asn) + L-asparagine + ATP = L-asparaginyl-tRNA(Asn) + AMP + diphosphate + H(+). In Geotalea uraniireducens (strain Rf4) (Geobacter uraniireducens), this protein is Asparagine--tRNA ligase.